A 730-amino-acid polypeptide reads, in one-letter code: Synaptogenesis protein syg-1 (730 aa).

The first 18 residues, 1–18 (MVRWQTWPLLLLFQLVTC), serve as a signal peptide directing secretion. Residues 19-551 (QQLQQRIVEA…WIVITAKFDR (533 aa)) are Extracellular-facing. 5 Ig-like domains span residues 23-123 (QRIV…AKLT), 131-265 (PKIV…VKLS), 270-352 (PQIN…IKLN), 357-433 (ARIM…QILS), and 441-540 (PPTV…RNIL). Intrachain disulfides connect cysteine 44-cysteine 104, cysteine 152-cysteine 246, cysteine 292-cysteine 336, cysteine 378-cysteine 420, and cysteine 462-cysteine 519. Asparagine 93 and asparagine 206 each carry an N-linked (GlcNAc...) asparagine glycan. The helical transmembrane segment at 552–572 (MVALAIISAGVLLVSLLCCLC) threads the bilayer. The Cytoplasmic portion of the chain corresponds to 573–730 (MCRSNCRSRK…RPISRTSTHV (158 aa)).

It belongs to the immunoglobulin superfamily. In terms of assembly, interacts with skr-1. Interacts with syg-2. Interacts with the WAVE regulatory complex; the interaction leads to formation of a synaptic F-actin network that is required for synapse formation and axon branching. In terms of tissue distribution, expression in head motor neurons, occasionally in HSN neurons and weakly in other cells in the vulval region. Expressed in the primary synapse region of HSNL motor neuron.

The protein resides in the cell membrane. The protein localises to the cell projection. Its subcellular location is the axon. It localises to the synapse. Cell adhesion protein. Involved in synapse formation in the HSNL egg-laying motor neuron. Inhibits assembly of the SCF(sel-10) E3 ubiquitin ligase complex at synapses, and protects them from elimination. Also required for F-actin assembly at the synaptic region and for axon branch formation. In Caenorhabditis elegans, this protein is Synaptogenesis protein syg-1.